Reading from the N-terminus, the 284-residue chain is Exported repetitive protein (284 aa).

Residues 1-22 form the signal peptide; that stretch reads MPNRRRRKLSTAMSAVAALAVA. Residues 23–252 lie on the Extracellular side of the membrane; sequence SPCAYFLVYE…MPSIMQAVQN (230 aa). A disordered region spans residues 80 to 216; it reads TGSGDASTGL…SPATTSTGGG (137 aa). Low complexity predominate over residues 86–110; it reads STGLTGPGLTSPGLTSPGLTSPGLT. Tandem repeats lie at residues 92–96, 97–101, 102–106, 107–111, 112–116, 117–121, 144–148, 149–153, 154–158, 159–163, 164–168, and 169–173. Positions 92-121 are 6 X 5 AA tandem repeats of P-[GA]-L-T-S; the sequence is PGLTSPGLTSPGLTSPGLTDPALTSPGLTP. The segment at 144–173 is 6 X 5 AA approximate tandem repeats of P-[ATG]-[LG]-X-X; it reads PALTNPALTSPTGATPGLTSPTGLDPALGG. The span at 145-165 shows a compositional bias: polar residues; sequence ALTNPALTSPTGATPGLTSPT. Residues 202-212 show a composition bias toward low complexity; it reads GTIPSSPATTS. Residues 253-273 form a helical membrane-spanning segment; it reads GGAAAPAASPPVPPIPAAAAV. The Cytoplasmic segment spans residues 274–284; the sequence is PPTDPITVPVA.

It to M.leprae 28 kDa antigen.

It is found in the cell membrane. In terms of biological role, surface-exposed protein required for multiplication and intracellular growth. This chain is Exported repetitive protein (erp), found in Mycobacterium bovis (strain ATCC BAA-935 / AF2122/97).